The following is a 349-amino-acid chain: Isopentenyl-diphosphate delta-isomerase (349 aa).

8-9 (RK) provides a ligand contact to substrate. Residues serine 66, 67 to 69 (SMT), serine 97, and asparagine 125 contribute to the FMN site. 97 to 99 (STR) serves as a coordination point for substrate. Substrate is bound at residue glutamine 160. Glutamate 161 lines the Mg(2+) pocket. Residues lysine 192, threonine 222, 272 to 274 (GMK), and 293 to 294 (AR) contribute to the FMN site.

This sequence belongs to the IPP isomerase type 2 family. In terms of assembly, homooctamer. Dimer of tetramers. It depends on FMN as a cofactor. Requires NADPH as cofactor. The cofactor is Mg(2+).

The protein resides in the cytoplasm. It catalyses the reaction isopentenyl diphosphate = dimethylallyl diphosphate. In terms of biological role, involved in the biosynthesis of isoprenoids. Catalyzes the 1,3-allylic rearrangement of the homoallylic substrate isopentenyl (IPP) to its allylic isomer, dimethylallyl diphosphate (DMAPP). The sequence is that of Isopentenyl-diphosphate delta-isomerase from Oceanobacillus iheyensis (strain DSM 14371 / CIP 107618 / JCM 11309 / KCTC 3954 / HTE831).